We begin with the raw amino-acid sequence, 365 residues long: Patr class I histocompatibility antigen, A-2 alpha chain (365 aa).

An N-terminal signal peptide occupies residues 1–24; the sequence is MAVMPPRTLLLLLSGALALTQTWA. Residues 25-114 are alpha-1; it reads GSHSMRYFFT…LRGYYNQSED (90 aa). Residues 25-308 lie on the Extracellular side of the membrane; that stretch reads GSHSMRYFFT…EPSSQPTIPI (284 aa). Residue Asn-110 is glycosylated (N-linked (GlcNAc...) asparagine). Positions 115–206 are alpha-2; that stretch reads GSHTIQIMYG…ENGKETLQRT (92 aa). Intrachain disulfides connect Cys-125–Cys-188 and Cys-227–Cys-283. The segment at 207-298 is alpha-3; it reads DPPKTHMTHH…GLPKPLTLRW (92 aa). An Ig-like C1-type domain is found at 209 to 295; that stretch reads PKTHMTHHPI…QHEGLPKPLT (87 aa). Residues 299-308 are connecting peptide; the sequence is EPSSQPTIPI. A helical transmembrane segment spans residues 309 to 332; it reads VGIIAGLVLLGAVITGAVVAAVMW. Residues 333 to 365 lie on the Cytoplasmic side of the membrane; that stretch reads RRKSSDRKGGSYTQAASSDSAQGSDVSLTACKV. The tract at residues 339-360 is disordered; the sequence is RKGGSYTQAASSDSAQGSDVSL. Residue Ser-343 is modified to Phosphoserine. Tyr-344 carries the post-translational modification Phosphotyrosine. Positions 346 to 359 are enriched in low complexity; the sequence is QAASSDSAQGSDVS. Residues Ser-349, Ser-350, Ser-352, Ser-356, and Ser-359 each carry the phosphoserine modification.

This sequence belongs to the MHC class I family. Heterodimer of an alpha chain and a beta chain (beta-2-microglobulin).

Its subcellular location is the membrane. Its function is as follows. Involved in the presentation of foreign antigens to the immune system. The polypeptide is Patr class I histocompatibility antigen, A-2 alpha chain (Pan troglodytes (Chimpanzee)).